Consider the following 313-residue polypeptide: Homoserine O-acetyltransferase (313 aa).

The active-site Acyl-thioester intermediate is Cys144. Substrate contacts are provided by Lys165 and Ser194. His236 (proton acceptor) is an active-site residue. Glu238 is a catalytic residue. Arg250 contacts substrate.

It belongs to the MetA family.

The protein localises to the cytoplasm. It catalyses the reaction L-homoserine + acetyl-CoA = O-acetyl-L-homoserine + CoA. It functions in the pathway amino-acid biosynthesis; L-methionine biosynthesis via de novo pathway; O-acetyl-L-homoserine from L-homoserine: step 1/1. In terms of biological role, transfers an acetyl group from acetyl-CoA to L-homoserine, forming acetyl-L-homoserine. In Jannaschia sp. (strain CCS1), this protein is Homoserine O-acetyltransferase.